We begin with the raw amino-acid sequence, 150 residues long: MAKLILTHEVTGLGAAGDVVEVKDGYARNFLLPRNFALTWTKGGEKQVESIKAARAAREHASLEDAQKQAAALQSKPVQLVVKAGETGRLFGTVKQADVANAVEAAGLGSIDKRKVELPVHIKSVGSYQANVRLHEDVAAVIELDVVAGK.

Belongs to the bacterial ribosomal protein bL9 family.

Binds to the 23S rRNA. This is Large ribosomal subunit protein bL9 from Pseudarthrobacter chlorophenolicus (strain ATCC 700700 / DSM 12829 / CIP 107037 / JCM 12360 / KCTC 9906 / NCIMB 13794 / A6) (Arthrobacter chlorophenolicus).